The following is a 113-amino-acid chain: Hydrogenase maturation factor HypA 1 (113 aa).

Residue H2 participates in Ni(2+) binding. The Zn(2+) site is built by C73, C76, C89, and C92.

The protein belongs to the HypA/HybF family.

Functionally, involved in the maturation of [NiFe] hydrogenases. Required for nickel insertion into the metal center of the hydrogenase. The sequence is that of Hydrogenase maturation factor HypA 1 from Bradyrhizobium diazoefficiens (strain JCM 10833 / BCRC 13528 / IAM 13628 / NBRC 14792 / USDA 110).